The sequence spans 345 residues: MEPQKIMPPSKPHPPVVGKVTHHSIELYWDLEKKAKRQGPQEQWFRFSIEEEDPKMHTYGIIYTGYATKHVVEGLEPRTLYRFRLKVTSPSGECEYSPLVSVSTTREPISSEHLHRAVSVNDEDLLVRILQGGRVKVDVPNKFGFTALMVAAQKGYTRLVKILVSNGTDVNLKNGSGKDSLMLACYAGHLDVVKYLRRHGASWQARDLGGCTALHWAADGGHCSVIEWMIKDGCEVDVVDTGSGWTPLMRVSAVSGNQRVASLLIDAGANVNVKDRNGKTPLMVAVLNNHEELVQLLLDKGADASVKNEFGKGVLEMARVFDRQSVVSLLEERKKKQRPKKSCVC.

One can recognise a Fibronectin type-III domain in the interval 8–108 (PPSKPHPPVV…LVSVSTTREP (101 aa)). 6 ANK repeats span residues 109 to 139 (ISSE…KVDV), 143 to 172 (FGFT…DVNL), 176 to 205 (SGKD…SWQA), 209 to 238 (GGCT…EVDV), 243 to 273 (SGWT…NVNV), and 277 to 306 (NGKT…DASV).

In terms of assembly, interacts with COPS5; regulates the phosphorylation of JUN and the transcriptional activity of AP-1. Interacts with RYBP; may prevent the ubiquitin-mediated proteasomal degradation of FANK1. Post-translationally, polyubiquitinated. Polyubiquitination leads to proteasomal degradation. In terms of tissue distribution, mostly restricted to testis.

It is found in the nucleus. The protein resides in the cytoplasm. The protein localises to the cytosol. It localises to the cytoskeleton. Its subcellular location is the cilium basal body. It is found in the cell projection. The protein resides in the cilium. Its function is as follows. Through the activation of JUN and AP-1-mediated transcription, may regulate apoptosis. This is Fibronectin type 3 and ankyrin repeat domains protein 1 from Homo sapiens (Human).